We begin with the raw amino-acid sequence, 159 residues long: Large ribosomal subunit protein uL30 (159 aa).

This sequence belongs to the universal ribosomal protein uL30 family. Part of the 50S ribosomal subunit.

This is Large ribosomal subunit protein uL30 from Aeropyrum pernix (strain ATCC 700893 / DSM 11879 / JCM 9820 / NBRC 100138 / K1).